Consider the following 75-residue polypeptide: Small ribosomal subunit protein bS16 (75 aa).

Belongs to the bacterial ribosomal protein bS16 family.

The protein is Small ribosomal subunit protein bS16 of Campylobacter hominis (strain ATCC BAA-381 / DSM 21671 / CCUG 45161 / LMG 19568 / NCTC 13146 / CH001A).